The sequence spans 1163 residues: Voltage-gated inwardly rectifying potassium channel KCNH2 (1163 aa).

Residues 1 to 405 (MPVRRGHVAP…RIHRWTILHY (405 aa)) lie on the Cytoplasmic side of the membrane. The 72-residue stretch at 17 to 88 (TIIRKFEGQS…AAQIAQALLG (72 aa)) folds into the PAS domain. The 53-residue stretch at 92-144 (RKVEIAFYRKDGSCFLCLVDVVPVKNEDGAVIMFILNFEVVMEKDMVGSPAHD) folds into the PAC domain. Positions 235–286 (VGPASASPVASIPGPHPSPRAQSLNPDASGSSCSLARTRSRESCASVRRASS) are disordered. Phosphoserine occurs at positions 239 and 245. Over residues 254 to 271 (RAQSLNPDASGSSCSLAR) the composition is skewed to polar residues. Phosphoserine is present on residues serine 285, serine 286, serine 322, and serine 353. Residues 406-426 (SPFKAVWDWLILLLVIYTAVF) form a helical membrane-spanning segment. The Extracellular segment spans residues 427–452 (TPYSAAFLLKETEDGSQAPDCGYACQ). The chain crosses the membrane as a helical span at residues 453–473 (PLAVVDLLVDIMFIVDILINF). Residues 474 to 497 (RTTYVNANEEVVSHPGRIAVHYFK) are Cytoplasmic-facing. Residues 498 to 518 (GWFLIDMVAAIPFDLLIFGSG) form a helical membrane-spanning segment. Residues 519 to 522 (SEEL) are Extracellular-facing. A helical; Voltage-sensor membrane pass occupies residues 523-543 (IGLLKTARLLRLVRVARKLDR). Residues 544–549 (YSEYGA) are Cytoplasmic-facing. A helical transmembrane segment spans residues 550–570 (AVLFLLMCTFALIAHWLACIW). The Extracellular segment spans residues 571–613 (YAIGNMEQPHMDSHIGWLHNLGDQIGKPYNSSGLGGPSIKDKY). Asparagine 600 carries N-linked (GlcNAc...) asparagine glycosylation. An intramembrane region (pore-forming) is located at residues 614-634 (VTALYFTFSSLTSVGFGNVSP). The Selectivity filter motif lies at 626–631 (SVGFGN). Topologically, residues 635 to 640 (NTNSEK) are extracellular. The helical transmembrane segment at 641-661 (IFSICVMLIGSLMYASIFGNV) threads the bilayer. Residues 662–1163 (SAIIQRLYSG…LHRHGSDPGS (502 aa)) are Cytoplasmic-facing. The segment at 744 to 844 (PFRGATKGCL…IHRDDLLEVL (101 aa)) is cNMP-binding domain. Residues serine 873 and serine 876 each carry the phosphoserine modification. Disordered regions lie at residues 873 to 992 (SPSS…NPLS), 1015 to 1043 (ELPR…GDVE), and 1126 to 1163 (AGAP…DPGS). Basic residues predominate over residues 885-894 (RQRKRKLSFR). Residues 932–943 (GESPSSGPSSPE) show a composition bias toward low complexity. Arginine 1018 carries the omega-N-methylarginine modification. Positions 1039–1066 (RGDVESRLDALQRQLNRLETRLSADMAT) form a coiled coil. Residue serine 1141 is modified to Phosphoserine.

The protein belongs to the potassium channel family. H (Eag) (TC 1.A.1.20) subfamily. Kv11.1/KCNH2 sub-subfamily. The potassium channel is probably composed of a homo- or heterotetrameric complex of pore-forming alpha subunits that can associate with modulating beta subunits. Interacts with DNAJB12 and DNAJB14; chaperones DNAJB12 and DNAJB14 promote tetramerization. Heteromultimer with KCNH6/ERG2 and KCNH7/ERG3. Interacts with ALG10B. Forms a stable complex with KCNE1 or KCNE2, and that this heteromultimerization regulates Inward rectifier potassium channel activity. Interacts with CANX. The core-glycosylated, but not the fully glycosylated form interacts with RNF207. Interacts with NDFIP1 and NDFIP2; this interaction decreases the cell membrane expression by targeting KCNH2, through interaction with NEDD4L, for the degradation through the multivesicular bodies (MVBs)-lysosomal pathway. Phosphorylated on serine and threonine residues. Phosphorylation by PKA inhibits ion conduction. Highly expressed in brain and testis, slightly less so in heart, adrenal, retina and thymus. Detected at lower levels in lung, soleus, tibialis, and at very low levels in cornea and lens. A shorter transcript is detected in skeletal muscle. Found in pituitary.

The protein resides in the cell membrane. It catalyses the reaction K(+)(in) = K(+)(out). Pore-forming (alpha) subunit of voltage-gated inwardly rectifying potassium channel. Characterized by unusual gating kinetics by producing relatively small outward currents during membrane depolarization and large inward currents during subsequent repolarization which reflect a rapid inactivation during depolarization and quick recovery from inactivation but slow deactivation (closing) during repolarization. Channel properties are modulated by cAMP and subunit assembly. Forms a stable complex with KCNE1 or KCNE2, and that this heteromultimerization regulates inward rectifier potassium channel activity. The protein is Voltage-gated inwardly rectifying potassium channel KCNH2 of Rattus norvegicus (Rat).